The chain runs to 271 residues: Fatty acid elongase A (271 aa).

7 helical membrane passes run Ile-35–Phe-55, Ala-68–Ile-88, Ile-102–Ser-122, Ser-139–Leu-159, Cys-165–Phe-185, His-198–Tyr-220, and Thr-237–Val-257.

Belongs to the ELO family.

Its subcellular location is the membrane. It catalyses the reaction a very-long-chain acyl-CoA + malonyl-CoA + H(+) = a very-long-chain 3-oxoacyl-CoA + CO2 + CoA. Functionally, fatty acid elongase with strict substrate specificity for monounsaturated fatty acids, in particular 16:1 (delta-9) to produce the unusual 18:1 (delta-11) fatty acid. In Dictyostelium discoideum (Social amoeba), this protein is Fatty acid elongase A (eloA).